Here is a 135-residue protein sequence, read N- to C-terminus: MNRDIGKNAERELVSILRGEGFNAVRIPTSNSSPNPLPDIFATKGNTLLSIECKSTWENKVKVKEHQVRKLLDFLSMFTMKGVPLIAIKFKQVHEWRVLVPEKAEDIIVTIDNSIPIEDLFKILEKRIEEKILTP.

The Mg(2+) site is built by glutamate 10, aspartate 39, and glutamate 52.

The protein belongs to the Holliday junction resolvase Hjc family. Hje subfamily. In terms of assembly, homodimer. It depends on Mg(2+) as a cofactor.

The catalysed reaction is Endonucleolytic cleavage at a junction such as a reciprocal single-stranded crossover between two homologous DNA duplexes (Holliday junction).. A structure-specific endonuclease that resolves Holliday junction (HJ) intermediates during genetic recombination. Acts only on 4-way DNA junctions in a sequence non-specific manner; introduces paired nicks in opposing strands 2 bases 3' of the point of strand exchange only on continuous strands of 4-way junction DNA. Cleaves both mobile and immobile junctions. The polypeptide is Crossover junction endodeoxyribonuclease Hje (hje) (Saccharolobus solfataricus (strain ATCC 35092 / DSM 1617 / JCM 11322 / P2) (Sulfolobus solfataricus)).